The following is an 85-amino-acid chain: Large ribosomal subunit protein bL27 (85 aa).

The tract at residues 1 to 21 (MAHKKGVGSSRNGRDSDGQRL) is disordered.

It belongs to the bacterial ribosomal protein bL27 family.

The protein is Large ribosomal subunit protein bL27 of Citrifermentans bemidjiense (strain ATCC BAA-1014 / DSM 16622 / JCM 12645 / Bem) (Geobacter bemidjiensis).